A 205-amino-acid polypeptide reads, in one-letter code: Large ribosomal subunit protein uL4 (205 aa).

Positions 44–79 (RAGTKAQKTRREVSGSGAKPWRQKGTGRARAGSSRS) are disordered.

Belongs to the universal ribosomal protein uL4 family. In terms of assembly, part of the 50S ribosomal subunit.

One of the primary rRNA binding proteins, this protein initially binds near the 5'-end of the 23S rRNA. It is important during the early stages of 50S assembly. It makes multiple contacts with different domains of the 23S rRNA in the assembled 50S subunit and ribosome. Its function is as follows. Forms part of the polypeptide exit tunnel. This is Large ribosomal subunit protein uL4 from Coxiella burnetii (strain Dugway 5J108-111).